An 855-amino-acid chain; its full sequence is Lon protease (855 aa).

One can recognise a Lon N-terminal domain in the interval Ile-45–Tyr-288. Position 439 to 446 (Gly-439 to Thr-446) interacts with ATP. The Lon proteolytic domain maps to Ile-674 to Lys-855. Active-site residues include Ser-761 and Lys-804.

It belongs to the peptidase S16 family. In terms of assembly, homohexamer. Organized in a ring with a central cavity.

It localises to the cytoplasm. It carries out the reaction Hydrolysis of proteins in presence of ATP.. Its function is as follows. ATP-dependent serine protease that mediates the selective degradation of mutant and abnormal proteins as well as certain short-lived regulatory proteins. Required for cellular homeostasis and for survival from DNA damage and developmental changes induced by stress. Degrades polypeptides processively to yield small peptide fragments that are 5 to 10 amino acids long. Binds to DNA in a double-stranded, site-specific manner. The polypeptide is Lon protease (Karelsulcia muelleri (strain GWSS) (Sulcia muelleri)).